The chain runs to 372 residues: NADH-quinone oxidoreductase subunit H (372 aa).

8 helical membrane-spanning segments follow: residues 34–54 (LPLG…LYAL), 106–126 (FLFV…FAVL), 139–159 (VGLF…LAAG), 178–198 (IVSY…MAGT), 217–237 (FFLF…IASL), 269–289 (VIFL…AIVF), 313–333 (VWGA…QMWL), and 352–372 (VLTP…IYVP).

It belongs to the complex I subunit 1 family. As to quaternary structure, NDH-1 is composed of 14 different subunits. Subunits NuoA, H, J, K, L, M, N constitute the membrane sector of the complex.

The protein resides in the cell inner membrane. It catalyses the reaction a quinone + NADH + 5 H(+)(in) = a quinol + NAD(+) + 4 H(+)(out). NDH-1 shuttles electrons from NADH, via FMN and iron-sulfur (Fe-S) centers, to quinones in the respiratory chain. The immediate electron acceptor for the enzyme in this species is believed to be ubiquinone. Couples the redox reaction to proton translocation (for every two electrons transferred, four hydrogen ions are translocated across the cytoplasmic membrane), and thus conserves the redox energy in a proton gradient. This subunit may bind ubiquinone. In Chlorobium luteolum (strain DSM 273 / BCRC 81028 / 2530) (Pelodictyon luteolum), this protein is NADH-quinone oxidoreductase subunit H.